The following is a 246-amino-acid chain: MKISVLTIFPEMVEVIKKYGVISRAVQENKIEINIFNLRDFTSDKHRTVDDYPFGGGPGMVMKPEPFFRFYDFYVQAFGKPHTILTSPQGRTFNNDLVKELSLKENLLIICGRYEGIDERVMELVDDEISIGDYVLTGGELPAMVMIDAISRFVPGVISDESVIEESFNTGLLDHPHYTRPREFNGRKVPEVLLEGNHEKIELWRRKMSLKKTIQRRPDLFLKKEFDEVDKIALLELLRELINDVK.

Residues Gly-112 and Ile-131 to Leu-136 each bind S-adenosyl-L-methionine.

Belongs to the RNA methyltransferase TrmD family. As to quaternary structure, homodimer.

It localises to the cytoplasm. It catalyses the reaction guanosine(37) in tRNA + S-adenosyl-L-methionine = N(1)-methylguanosine(37) in tRNA + S-adenosyl-L-homocysteine + H(+). Specifically methylates guanosine-37 in various tRNAs. In Thermosipho africanus (strain TCF52B), this protein is tRNA (guanine-N(1)-)-methyltransferase.